Consider the following 441-residue polypeptide: Probable glycine dehydrogenase (decarboxylating) subunit 1 (441 aa).

This sequence belongs to the GcvP family. N-terminal subunit subfamily. In terms of assembly, the glycine cleavage system is composed of four proteins: P, T, L and H. In this organism, the P 'protein' is a heterodimer of two subunits.

It catalyses the reaction N(6)-[(R)-lipoyl]-L-lysyl-[glycine-cleavage complex H protein] + glycine + H(+) = N(6)-[(R)-S(8)-aminomethyldihydrolipoyl]-L-lysyl-[glycine-cleavage complex H protein] + CO2. In terms of biological role, the glycine cleavage system catalyzes the degradation of glycine. The P protein binds the alpha-amino group of glycine through its pyridoxal phosphate cofactor; CO(2) is released and the remaining methylamine moiety is then transferred to the lipoamide cofactor of the H protein. In Halobacterium salinarum (strain ATCC 700922 / JCM 11081 / NRC-1) (Halobacterium halobium), this protein is Probable glycine dehydrogenase (decarboxylating) subunit 1.